The chain runs to 1103 residues: Ubiquitin carboxyl-terminal hydrolase 7 (1103 aa).

Low complexity predominate over residues Met-1 to Gln-11. The interval Met-1–Asn-40 is disordered. The tract at residues Met-1 to Lys-209 is interaction with TSPYL5. Ser-19 is modified (phosphoserine). Acidic residues predominate over residues Glu-20–Asp-32. Phosphoserine is present on residues Ser-50 and Ser-54. Positions Ser-54–Lys-209 are interaction with p53/TP53 and MDM2. The MATH domain maps to Glu-69–Val-196. The necessary for nuclear localization stretch occupies residues Thr-71–Trp-206. In terms of domain architecture, USP spans Val-215 to Glu-522. Cys-224 (nucleophile) is an active-site residue. The active-site Proton acceptor is the His-465. Residue Lys-870 is modified to N6-acetyllysine; alternate. A Glycyl lysine isopeptide (Lys-Gly) (interchain with G-Cter in SUMO2); alternate cross-link involves residue Lys-870. Lys-870 participates in a covalent cross-link: Glycyl lysine isopeptide (Lys-Gly) (interchain with G-Cter in ubiquitin); alternate. Residue Lys-883 forms a Glycyl lysine isopeptide (Lys-Gly) (interchain with G-Cter in SUMO2) linkage. Ser-964 carries the phosphoserine modification. 2 positions are modified to N6-acetyllysine: Lys-1085 and Lys-1097.

This sequence belongs to the peptidase C19 family. As to quaternary structure, monomer. Homodimer. Part of a complex with DAXX, MDM2, RASSF1 and USP7. Part of a complex with DAXX, MDM2 and USP7. Interacts with MDM2; the interaction is independent of p53/TP53. Interacts with DAXX; the interaction is direct and independent of MDM2 and p53/TP53. Component of a complex composed of KMT2E, OGT and USP7; the complex stabilizes KMT2E, preventing KMT2E ubiquitination and proteasomal-mediated degradation. Interacts (via MATH domain) with KMT2E. Interacts with OGT. Interacts with FOXO4; the interaction is enhanced in presence of hydrogen peroxide and occurs independently of p53/TP53. Interacts with p53/TP53; the interaction is enhanced in response to DNA damage; the interaction is impaired by TSPYL5. Interacts with PTEN; the interaction is direct. Interacts with ATXN1 and the strength of interaction is influenced by the length of the poly-Gln region in ATXN1. A weaker interaction seen with mutants having longer poly-Gln regions. Interacts with KIAA1530/UVSSA. Interacts with MEX3C and antagonizes its ability to degrade mRNA. Interacts with DNMT1 and UHRF1. Interacts with FOXP3. Interacts (via MATH domain) with RNF220. Associated component of the Polycomb group (PcG) multiprotein PRC1-like complex. Interacts with EPOP. Interacts with OTUD4 and USP9X; the interaction is direct. Interacts with CRY2. Interacts with REST. Interacts with ERCC6. Part of a complex consisting of USP7, MAGEL2 and TRIM27; directly interacts with MAGEL2; directly interacts with TRIM27. In terms of processing, polyneddylated. Post-translationally, not sumoylated. Ubiquitinated at Lys-870. Polyubiquitinated. Strongly expressed in the testis, spleen and brain. Weakly expressed in the stomach, small intestine, skeletal muscle and uterus.

It localises to the nucleus. Its subcellular location is the cytoplasm. It is found in the PML body. The protein resides in the chromosome. It carries out the reaction Thiol-dependent hydrolysis of ester, thioester, amide, peptide and isopeptide bonds formed by the C-terminal Gly of ubiquitin (a 76-residue protein attached to proteins as an intracellular targeting signal).. Its function is as follows. Hydrolase that deubiquitinates target proteins such as ARMC5, FOXO4, DEPTOR, KAT5, p53/TP53, MDM2, ERCC6, DNMT1, UHRF1, PTEN, KMT2E/MLL5 and DAXX. Together with DAXX, prevents MDM2 self-ubiquitination and enhances the E3 ligase activity of MDM2 towards p53/TP53, thereby promoting p53/TP53 ubiquitination and proteasomal degradation. Deubiquitinates p53/TP53, preventing degradation of p53/TP53, and enhances p53/TP53-dependent transcription regulation, cell growth repression and apoptosis. Deubiquitinates p53/TP53 and MDM2 and strongly stabilizes p53/TP53 even in the presence of excess MDM2, and also induces p53/TP53-dependent cell growth repression and apoptosis. Deubiquitination of FOXO4 in presence of hydrogen peroxide is not dependent on p53/TP53 and inhibits FOXO4-induced transcriptional activity. In association with DAXX, is involved in the deubiquitination and translocation of PTEN from the nucleus to the cytoplasm, both processes that are counteracted by PML. Deubiquitinates KMT2E preventing KMT2E proteasomal-mediated degradation. Involved in cell proliferation during early embryonic development. Involved in transcription-coupled nucleotide excision repair (TC-NER) in response to UV damage: recruited to DNA damage sites following interaction with KIAA1530/UVSSA and promotes deubiquitination of ERCC6, preventing UV-induced degradation of ERCC6. Involved in maintenance of DNA methylation via its interaction with UHRF1 and DNMT1: acts by mediating deubiquitination of UHRF1 and DNMT1, preventing their degradation and promoting DNA methylation by DNMT1. Deubiquitinates alkylation repair enzyme ALKBH3. OTUD4 recruits USP7 and USP9X to stabilize ALKBH3, thereby promoting the repair of alkylated DNA lesions. Acts as a chromatin regulator via its association with the Polycomb group (PcG) multiprotein PRC1-like complex; may act by deubiquitinating components of the PRC1-like complex. Able to mediate deubiquitination of histone H2B; it is however unsure whether this activity takes place in vivo. Exhibits a preference towards 'Lys-48'-linked ubiquitin chains. Increases regulatory T-cells (Treg) suppressive capacity by deubiquitinating and stabilizing transcription factor FOXP3 which is crucial for Treg cell function. Plays a role in the maintenance of the circadian clock periodicity via deubiquitination and stabilization of the CRY1 and CRY2 proteins. Deubiquitinates REST, thereby stabilizing REST and promoting the maintenance of neural progenitor cells. Deubiquitinates SIRT7, inhibiting SIRT7 histone deacetylase activity and regulating gluconeogenesis. Involved in the regulation of WASH-dependent actin polymerization at the surface of endosomes and the regulation of endosomal protein recycling. It maintains optimal WASH complex activity and precise F-actin levels via deubiquitination of TRIM27 and WASHC1. Mediates the deubiquitination of phosphorylated DEPTOR, promoting its stability and leading to decreased mTORC1 signaling. In Rattus norvegicus (Rat), this protein is Ubiquitin carboxyl-terminal hydrolase 7 (Usp7).